The chain runs to 172 residues: C-phycocyanin-2 beta subunit (172 aa).

Asn72 bears the N4-methylasparagine mark. (2R,3E)-phycocyanobilin-binding residues include Cys82 and Cys153.

This sequence belongs to the phycobiliprotein family. In terms of assembly, heterodimer of an alpha and a beta subunit, which further assembles into trimers and the trimers into hexamers. Post-translationally, contains two covalently linked bilin chromophores.

It localises to the cellular thylakoid membrane. In terms of biological role, light-harvesting photosynthetic bile pigment-protein from the phycobiliprotein complex (phycobilisome, PBS). Phycocyanin is the major phycobiliprotein in the PBS rod. The polypeptide is C-phycocyanin-2 beta subunit (cpcB2) (Pseudanabaena tenuis (strain PCC 7409)).